The primary structure comprises 312 residues: Aquaglyceroporin-2 (312 aa).

Transmembrane regions (helical) follow at residues 78 to 98 (FLGN…SLLV), 104 to 124 (LGLT…SLGI), 151 to 171 (YIAA…GVFA), 203 to 223 (GIFY…LCVC), 239 to 259 (VAIG…SPLA), and 286 to 306 (YYFW…LFLY).

Belongs to the MIP/aquaporin (TC 1.A.8) family.

The protein localises to the membrane. It carries out the reaction glycerol(in) = glycerol(out). It catalyses the reaction H2O(in) = H2O(out). The enzyme catalyses urea(in) = urea(out). In terms of biological role, mediates water and glycerol transport across cell membranes. Permeable to urea. Permeable to methylamine/methylammonium. Permeable to dihydroxyacetone. This chain is Aquaglyceroporin-2, found in Trypanosoma brucei brucei.